A 341-amino-acid polypeptide reads, in one-letter code: S-adenosylmethionine:tRNA ribosyltransferase-isomerase (341 aa).

This sequence belongs to the QueA family. As to quaternary structure, monomer.

The protein resides in the cytoplasm. The enzyme catalyses 7-aminomethyl-7-carbaguanosine(34) in tRNA + S-adenosyl-L-methionine = epoxyqueuosine(34) in tRNA + adenine + L-methionine + 2 H(+). The protein operates within tRNA modification; tRNA-queuosine biosynthesis. Transfers and isomerizes the ribose moiety from AdoMet to the 7-aminomethyl group of 7-deazaguanine (preQ1-tRNA) to give epoxyqueuosine (oQ-tRNA). The sequence is that of S-adenosylmethionine:tRNA ribosyltransferase-isomerase from Citrifermentans bemidjiense (strain ATCC BAA-1014 / DSM 16622 / JCM 12645 / Bem) (Geobacter bemidjiensis).